Reading from the N-terminus, the 361-residue chain is D-alanine--D-alanine ligase (361 aa).

The ATP-grasp domain occupies 134–344 (KILAQRAGVP…YTDLITKLID (211 aa)). 169–224 (ASQLGSDLFVKPSNQGSSVGVSHVTNEKEYKVALAEAFKYDDKVLVEETVHGTEVE) lines the ATP pocket. Positions 297, 311, and 313 each coordinate Mg(2+).

This sequence belongs to the D-alanine--D-alanine ligase family. The cofactor is Mg(2+). Mn(2+) serves as cofactor.

Its subcellular location is the cytoplasm. The enzyme catalyses 2 D-alanine + ATP = D-alanyl-D-alanine + ADP + phosphate + H(+). It participates in cell wall biogenesis; peptidoglycan biosynthesis. Cell wall formation. The polypeptide is D-alanine--D-alanine ligase (Lactobacillus johnsonii (strain CNCM I-12250 / La1 / NCC 533)).